Here is a 224-residue protein sequence, read N- to C-terminus: ATP synthase subunit b (224 aa).

Residues 2–22 traverse the membrane as a helical segment; the sequence is TPSLGLIFWQSVIFLISFIIL.

The protein belongs to the ATPase B chain family. In terms of assembly, F-type ATPases have 2 components, F(1) - the catalytic core - and F(0) - the membrane proton channel. F(1) has five subunits: alpha(3), beta(3), gamma(1), delta(1), epsilon(1). F(0) has three main subunits: a(1), b(2) and c(10-14). The alpha and beta chains form an alternating ring which encloses part of the gamma chain. F(1) is attached to F(0) by a central stalk formed by the gamma and epsilon chains, while a peripheral stalk is formed by the delta and b chains.

It localises to the cell membrane. Functionally, f(1)F(0) ATP synthase produces ATP from ADP in the presence of a proton or sodium gradient. F-type ATPases consist of two structural domains, F(1) containing the extramembraneous catalytic core and F(0) containing the membrane proton channel, linked together by a central stalk and a peripheral stalk. During catalysis, ATP synthesis in the catalytic domain of F(1) is coupled via a rotary mechanism of the central stalk subunits to proton translocation. In terms of biological role, component of the F(0) channel, it forms part of the peripheral stalk, linking F(1) to F(0). The polypeptide is ATP synthase subunit b (Karelsulcia muelleri (strain GWSS) (Sulcia muelleri)).